The primary structure comprises 605 residues: Alpha-1,3-galactosidase A (605 aa).

Positions 1–20 (MKKYLHILPACFLFYAAAHA) are cleaved as a signal peptide. PbH1 repeat units follow at residues 256–278 (SKNI…VSQY), 312–334 (KGKV…NVHG), 421–443 (TPEV…LVTT), 444–466 (PRKV…LIEA), 477–507 (VKDV…HPSN), and 517–547 (HQNI…LFRN).

Belongs to the glycosyl hydrolase 110 family. A subfamily.

It catalyses the reaction Hydrolysis of terminal, non-reducing branched (1-&gt;3)-alpha-D-galactosidic residues, producing free D-galactose.. The enzyme catalyses Hydrolysis of terminal, non-reducing alpha-D-galactose residues in alpha-D-galactosides, including galactose oligosaccharides, galactomannans and galactolipids.. In terms of biological role, alpha-galactosidase that specifically removes branched alpha-1,3-linked galactose residues present in blood group B antigens. Has no activity toward linear alpha-1,3-linked galactose residues. This Bacteroides fragilis (strain ATCC 25285 / DSM 2151 / CCUG 4856 / JCM 11019 / LMG 10263 / NCTC 9343 / Onslow / VPI 2553 / EN-2) protein is Alpha-1,3-galactosidase A (glaA).